Consider the following 231-residue polypeptide: Ribonuclease 3 (231 aa).

Residues 1-134 (MKTLEKKLAE…FLGALLLDAG (134 aa)) enclose the RNase III domain. Glu47 serves as a coordination point for Mg(2+). Asp51 is a catalytic residue. Mg(2+) contacts are provided by Asp120 and Glu123. Glu123 is an active-site residue. The DRBM domain maps to 160 to 229 (DYKTALQELL…AKNALEKLQR (70 aa)).

This sequence belongs to the ribonuclease III family. Homodimer. Mg(2+) serves as cofactor.

It is found in the cytoplasm. The catalysed reaction is Endonucleolytic cleavage to 5'-phosphomonoester.. In terms of biological role, digests double-stranded RNA. Involved in the processing of primary rRNA transcript to yield the immediate precursors to the large and small rRNAs (23S and 16S). Also processes some mRNAs, and tRNAs when they are encoded in the rRNA operon. Its function is as follows. CRISPR (clustered regularly interspaced short palindromic repeat) is an adaptive immune system that provides protection against mobile genetic elements (viruses, transposable elements and conjugative plasmids). CRISPR clusters contain spacers, sequences complementary to antecedent mobile elements, and target invading nucleic acids. CRISPR clusters are transcribed and processed into CRISPR RNA (crRNA). In this organism endogenous ribonuclease 3 and Cas9 are required for correct coprocessing of pre-crRNA and the trans-encoded small RNA (tracrRNA). Cas9, crRNA and tracrRNA are required for cleavage of invading DNA. Complements pre-crRNA and tracrRNA coprocessing defects in an rnc deletion in S.pyogenes strain 370. The chain is Ribonuclease 3 from Streptococcus mutans serotype c (strain ATCC 700610 / UA159).